A 430-amino-acid chain; its full sequence is Enolase (430 aa).

(2R)-2-phosphoglycerate is bound at residue Q167. E209 acts as the Proton donor in catalysis. Mg(2+) contacts are provided by D245, E286, and D313. (2R)-2-phosphoglycerate is bound by residues K338, R367, S368, and K389. Residue K338 is the Proton acceptor of the active site.

It belongs to the enolase family. Mg(2+) serves as cofactor.

It localises to the cytoplasm. Its subcellular location is the secreted. The protein resides in the cell surface. The catalysed reaction is (2R)-2-phosphoglycerate = phosphoenolpyruvate + H2O. Its pathway is carbohydrate degradation; glycolysis; pyruvate from D-glyceraldehyde 3-phosphate: step 4/5. In terms of biological role, catalyzes the reversible conversion of 2-phosphoglycerate (2-PG) into phosphoenolpyruvate (PEP). It is essential for the degradation of carbohydrates via glycolysis. The chain is Enolase from Synechococcus sp. (strain CC9902).